A 159-amino-acid chain; its full sequence is RxLR effector protein 24 (159 aa).

A signal peptide spans 1–18 (MRFLVWVFFVGLVTFVSG). The RxLR-dEER motif lies at 58–82 (RFLRSNANQDLTTANDDSDVKEEER). An RABA-binding domain region spans residues 109–159 (EKAFQHMMKQGETPTSLAKRLEIGGAAELRYEKVYEKYTAWWINYHTVAGT).

Belongs to the RxLR effector family. Interacts with potato RABA GTPases including RABA1a, RABA2a and RABA4a.

It is found in the secreted. The protein resides in the host cell membrane. Its subcellular location is the host endomembrane system. Effector protein that contributes to pathogen virulence. Targets members of the RABA GTPases subfamily to inhibit vesicular secretion, leading to an accumulation of secretory proteins in the endoplasmic reticulum. The sequence is that of RxLR effector protein 24 from Phytophthora infestans (strain T30-4) (Potato late blight agent).